A 218-amino-acid chain; its full sequence is Cytochrome b6 (218 aa).

Residues 35-55 (IFYCLGGITLVCFLIQFATGF) form a helical membrane-spanning segment. A heme c-binding site is contributed by C38. 2 residues coordinate heme b: H89 and H103. A run of 3 helical transmembrane segments spans residues 93-113 (ASMMVLMLILHVFRVYLTGGF), 119-139 (LTWVTGVTMAVITVSFGVTGY), and 189-209 (LHTFVMPWLLAVFMLMHFLMI). Residues H190 and H205 each coordinate heme b.

The protein belongs to the cytochrome b family. PetB subfamily. As to quaternary structure, the 4 large subunits of the cytochrome b6-f complex are cytochrome b6, subunit IV (17 kDa polypeptide, PetD), cytochrome f and the Rieske protein, while the 4 small subunits are PetG, PetL, PetM and PetN. The complex functions as a dimer. The cofactor is heme b. Heme c is required as a cofactor.

The protein localises to the cellular thylakoid membrane. Functionally, component of the cytochrome b6-f complex, which mediates electron transfer between photosystem II (PSII) and photosystem I (PSI), cyclic electron flow around PSI, and state transitions. This is Cytochrome b6 from Synechococcus sp. (strain WH7803).